The chain runs to 37 residues: Large ribosomal subunit protein bL36 (37 aa).

Belongs to the bacterial ribosomal protein bL36 family.

This Deinococcus geothermalis (strain DSM 11300 / CIP 105573 / AG-3a) protein is Large ribosomal subunit protein bL36.